The sequence spans 124 residues: Small ribosomal subunit protein uS12 (124 aa).

The tract at residues 1 to 25 is disordered; it reads MATINQLVRKPRQATTYKSASPALD. D89 carries the post-translational modification 3-methylthioaspartic acid.

Belongs to the universal ribosomal protein uS12 family. As to quaternary structure, part of the 30S ribosomal subunit. Contacts proteins S8 and S17. May interact with IF1 in the 30S initiation complex.

Functionally, with S4 and S5 plays an important role in translational accuracy. Interacts with and stabilizes bases of the 16S rRNA that are involved in tRNA selection in the A site and with the mRNA backbone. Located at the interface of the 30S and 50S subunits, it traverses the body of the 30S subunit contacting proteins on the other side and probably holding the rRNA structure together. The combined cluster of proteins S8, S12 and S17 appears to hold together the shoulder and platform of the 30S subunit. This Stenotrophomonas maltophilia (strain R551-3) protein is Small ribosomal subunit protein uS12.